The following is a 568-amino-acid chain: Zinc finger protein 648 (568 aa).

Basic and acidic residues predominate over residues 1–11 (MAQVDSQDRWG). Residues 1-106 (MAQVDSQDRW…MSGKASWSRD (106 aa)) are disordered. 10 C2H2-type zinc fingers span residues 279–301 (YACE…RRLH), 307–329 (YQCS…IRTH), 335–358 (YPCP…RNMH), 364–386 (FPCS…QRTH), 392–414 (FRCP…QRVH), 420–442 (FPCP…QTLH), 448–470 (FKCA…QRIH), 476–498 (FPCT…QQIH), 504–526 (FLCA…IRMH), and 532–554 (YQCE…RAKH). The interval 548–568 (QRHRAKHGTCKKEPIPSSSDE) is disordered.

This sequence belongs to the krueppel C2H2-type zinc-finger protein family.

It localises to the nucleus. May be involved in transcriptional regulation. The polypeptide is Zinc finger protein 648 (ZNF648) (Homo sapiens (Human)).